The sequence spans 117 residues: Large ribosomal subunit protein bL20 (117 aa).

This sequence belongs to the bacterial ribosomal protein bL20 family.

In terms of biological role, binds directly to 23S ribosomal RNA and is necessary for the in vitro assembly process of the 50S ribosomal subunit. It is not involved in the protein synthesizing functions of that subunit. The chain is Large ribosomal subunit protein bL20 from Aliivibrio fischeri (strain ATCC 700601 / ES114) (Vibrio fischeri).